The sequence spans 5054 residues: Malformin synthetase mlfA (5054 aa).

Residues 194–585 are adenylation 1; it reads ERRAANRPHS…CGRADTQVKL (392 aa). Positions 723 to 799 constitute a Carrier 1 domain; it reads LGLSQLEQEI…EASSLAEVQE (77 aa). Position 760 is an O-(pantetheine 4'-phosphoryl)serine (Ser-760). The segment at 837–1268 is condensation 1; the sequence is EDVFPCTTMQ…ALNTLTLLQA (432 aa). The segment at 1296-1685 is adenylation 2; that stretch reads DRWVTRQPES…GRKDTQVKLR (390 aa). Residues 1823 to 1900 form the Carrier 2 domain; that stretch reads TASSKLELTL…QLAAILGEAT (78 aa). At Ser-1860 the chain carries O-(pantetheine 4'-phosphoryl)serine. Disordered stretches follow at residues 1899-1929 and 1964-1994; these read ATGQ…NDGV and GSSS…VSPV. Composition is skewed to low complexity over residues 1904–1927 and 1965–1981; these read ESSA…STND and SSSC…SSSS. A condensation 2 region spans residues 2033-2448; that stretch reads EDIYPATALQ…GVSYRDKQTL (416 aa). An adenylation 3 region spans residues 2471–2863; it reads VRTPHAPAVF…IGRRDGQLKL (393 aa). Positions 2999–3075 constitute a Carrier 3 domain; the sequence is RPATAQEREM…QLMRHLSANG (77 aa). O-(pantetheine 4'-phosphoryl)serine is present on Ser-3036. 2 condensation regions span residues 3092-3557 and 3578-3997; these read WVPL…TYDQ and DIYP…EQLV. The adenylation 4 stretch occupies residues 4022–4412; the sequence is HSSREAACAW…VGRKDNQIKF (391 aa). The region spanning 4546-4622 is the Carrier 4 domain; sequence MPFTAAECKM…DLAYRTANLV (77 aa). Ser-4583 is modified (O-(pantetheine 4'-phosphoryl)serine). A condensation 5 region spans residues 4659 to 4972; that stretch reads EVLPTTSFQR…LQTIVQHQNN (314 aa).

It belongs to the NRP synthetase family.

It functions in the pathway secondary metabolite biosynthesis. Its function is as follows. Nonribosomal peptide synthetase; part of the gene cluster that mediates the biosynthesis of malformins, cyclic pentapeptides with a disulfide bond between 2 consecutive cysteins, that show potential anti-tumor as well as antimalarial and antitrypanosomal properties. The nonribosomal peptide synthetase mlfA is responsible of the formation of the cyclic pentapeptide. The malformin biosynthesis clusters in malformin-producing fungi also contain enzymes involved in the formation of the disulfide bond between the two consecutive cysteins within malformins, in addition to additional tailoring enzymes such as methyltransferases or oxidoreductases. They are also composed of up to 4 major facilitator superfamily transporters, and transcription factors probably involved in the regulation of the expression of those clusters. This chain is Malformin synthetase mlfA, found in Aspergillus niger (strain ATCC MYA-4892 / CBS 513.88 / FGSC A1513).